The primary structure comprises 81 residues: ATP synthase subunit C, cyanelle (81 aa).

2 helical membrane-spanning segments follow: residues 7-27 (AASV…PGIG) and 57-77 (LAFM…LLFA).

The protein belongs to the ATPase C chain family. F-type ATPases have 2 components, F(1) - the catalytic core - and F(0) - the membrane proton channel. F(1) has five subunits: alpha(3), beta(3), gamma(1), delta(1), epsilon(1). F(0) has four main subunits: a(1), b(1), b'(1) and c(10-14). The alpha and beta chains form an alternating ring which encloses part of the gamma chain. F(1) is attached to F(0) by a central stalk formed by the gamma and epsilon chains, while a peripheral stalk is formed by the delta, b and b' chains.

It localises to the plastid. The protein resides in the cyanelle thylakoid membrane. Functionally, f(1)F(0) ATP synthase produces ATP from ADP in the presence of a proton or sodium gradient. F-type ATPases consist of two structural domains, F(1) containing the extramembraneous catalytic core and F(0) containing the membrane proton channel, linked together by a central stalk and a peripheral stalk. During catalysis, ATP synthesis in the catalytic domain of F(1) is coupled via a rotary mechanism of the central stalk subunits to proton translocation. In terms of biological role, key component of the F(0) channel; it plays a direct role in translocation across the membrane. A homomeric c-ring of between 10-14 subunits forms the central stalk rotor element with the F(1) delta and epsilon subunits. In Cyanophora paradoxa, this protein is ATP synthase subunit C, cyanelle.